Consider the following 82-residue polypeptide: Host transcription reprogramming factor 10 (82 aa).

A signal peptide spans 1–19 (MQIFNMVSLVALFALGATA). The C2H2-type zinc finger occupies 57 to 81 (WVCHACNKQFTTPAALQKHKDTVVH).

The protein resides in the secreted. It is found in the host nucleus. Functionally, probable secreted effector that translocates into the nuclei of host cells to reprogram the expression of targeted genes by binding on effector binding elements in rice. The sequence is that of Host transcription reprogramming factor 10 from Pyricularia oryzae (strain 70-15 / ATCC MYA-4617 / FGSC 8958) (Rice blast fungus).